We begin with the raw amino-acid sequence, 296 residues long: Remorin 4.1 (296 aa).

Disordered stretches follow at residues 1–78, 121–142, and 242–266; these read MLTL…SGEN, TRIG…DSNP, and EKTQ…EGKR. The segment covering 21 to 39 has biased composition (basic and acidic residues); the sequence is ASDRRDETPSSEIVVRDIH. 2 stretches are compositionally biased toward polar residues: residues 41 to 53 and 62 to 78; these read MTTT…PQQR and PSRS…SGEN. 2 stretches are compositionally biased toward basic and acidic residues: residues 121–135 and 253–266; these read TRIG…HGQV and RKAE…EGKR. Residues 226-261 adopt a coiled-coil conformation; that stretch reads MKKIERKLEDRRAKAMEKTQNKVAKAQRKAEERRAT.

Belongs to the remorin family. Forms homodimer and heterodimer with REM4.2. Interacts with KIN11. Post-translationally, phosphorylated by KIN11. Probably ubiquitinated and degraded by the 26S proteasome pathway. In terms of tissue distribution, predominantly detected in bud, stem, root, flower, silique, and leaves, and enhanced dramatically in senescence leaf.

The protein resides in the cell membrane. Its function is as follows. Collaborates with REM4.2 to positively regulate the BCTV and BSCTV susceptibility. The protein is Remorin 4.1 of Arabidopsis thaliana (Mouse-ear cress).